The following is a 131-amino-acid chain: D-ribose pyranase (131 aa).

His-20 functions as the Proton donor in the catalytic mechanism. Residues Asp-28, His-98, and 120–122 (YAN) each bind substrate.

The protein belongs to the RbsD / FucU family. RbsD subfamily. In terms of assembly, homodecamer.

It is found in the cytoplasm. The catalysed reaction is beta-D-ribopyranose = beta-D-ribofuranose. It functions in the pathway carbohydrate metabolism; D-ribose degradation; D-ribose 5-phosphate from beta-D-ribopyranose: step 1/2. In terms of biological role, catalyzes the interconversion of beta-pyran and beta-furan forms of D-ribose. The chain is D-ribose pyranase from Bacillus cereus (strain ATCC 10987 / NRS 248).